Reading from the N-terminus, the 234-residue chain is UDP-2,3-diacylglucosamine hydrolase (234 aa).

Residues aspartate 9, histidine 11, aspartate 42, asparagine 80, and histidine 115 each contribute to the Mn(2+) site. 80–81 (NR) contributes to the substrate binding site. Aspartate 123, serine 161, lysine 165, lysine 168, and histidine 196 together coordinate substrate. The Mn(2+) site is built by histidine 196 and histidine 198.

It belongs to the LpxH family. It depends on Mn(2+) as a cofactor.

The protein localises to the cell inner membrane. It carries out the reaction UDP-2-N,3-O-bis[(3R)-3-hydroxytetradecanoyl]-alpha-D-glucosamine + H2O = 2-N,3-O-bis[(3R)-3-hydroxytetradecanoyl]-alpha-D-glucosaminyl 1-phosphate + UMP + 2 H(+). It functions in the pathway glycolipid biosynthesis; lipid IV(A) biosynthesis; lipid IV(A) from (3R)-3-hydroxytetradecanoyl-[acyl-carrier-protein] and UDP-N-acetyl-alpha-D-glucosamine: step 4/6. Functionally, hydrolyzes the pyrophosphate bond of UDP-2,3-diacylglucosamine to yield 2,3-diacylglucosamine 1-phosphate (lipid X) and UMP by catalyzing the attack of water at the alpha-P atom. Involved in the biosynthesis of lipid A, a phosphorylated glycolipid that anchors the lipopolysaccharide to the outer membrane of the cell. The sequence is that of UDP-2,3-diacylglucosamine hydrolase from Haemophilus ducreyi (strain 35000HP / ATCC 700724).